Consider the following 172-residue polypeptide: Adenine phosphoribosyltransferase (172 aa).

It belongs to the purine/pyrimidine phosphoribosyltransferase family. In terms of assembly, homodimer.

The protein resides in the cytoplasm. The enzyme catalyses AMP + diphosphate = 5-phospho-alpha-D-ribose 1-diphosphate + adenine. It functions in the pathway purine metabolism; AMP biosynthesis via salvage pathway; AMP from adenine: step 1/1. Catalyzes a salvage reaction resulting in the formation of AMP, that is energically less costly than de novo synthesis. The sequence is that of Adenine phosphoribosyltransferase from Synechocystis sp. (strain ATCC 27184 / PCC 6803 / Kazusa).